Here is a 290-residue protein sequence, read N- to C-terminus: Ribosomal RNA small subunit methyltransferase A (290 aa).

S-adenosyl-L-methionine-binding residues include Asn-27, Leu-29, Gly-54, Glu-75, Asp-100, and Asn-125.

Belongs to the class I-like SAM-binding methyltransferase superfamily. rRNA adenine N(6)-methyltransferase family. RsmA subfamily.

The protein resides in the cytoplasm. The catalysed reaction is adenosine(1518)/adenosine(1519) in 16S rRNA + 4 S-adenosyl-L-methionine = N(6)-dimethyladenosine(1518)/N(6)-dimethyladenosine(1519) in 16S rRNA + 4 S-adenosyl-L-homocysteine + 4 H(+). Functionally, specifically dimethylates two adjacent adenosines (A1518 and A1519) in the loop of a conserved hairpin near the 3'-end of 16S rRNA in the 30S particle. May play a critical role in biogenesis of 30S subunits. The protein is Ribosomal RNA small subunit methyltransferase A of Streptococcus agalactiae serotype Ia (strain ATCC 27591 / A909 / CDC SS700).